A 374-amino-acid polypeptide reads, in one-letter code: Histidinol-phosphate aminotransferase 2 (374 aa).

An N6-(pyridoxal phosphate)lysine modification is found at K227.

Belongs to the class-II pyridoxal-phosphate-dependent aminotransferase family. Histidinol-phosphate aminotransferase subfamily. As to quaternary structure, homodimer. Pyridoxal 5'-phosphate is required as a cofactor.

The catalysed reaction is L-histidinol phosphate + 2-oxoglutarate = 3-(imidazol-4-yl)-2-oxopropyl phosphate + L-glutamate. Its pathway is amino-acid biosynthesis; L-histidine biosynthesis; L-histidine from 5-phospho-alpha-D-ribose 1-diphosphate: step 7/9. The polypeptide is Histidinol-phosphate aminotransferase 2 (hisC2) (Ralstonia nicotianae (strain ATCC BAA-1114 / GMI1000) (Ralstonia solanacearum)).